Consider the following 193-residue polypeptide: Protein D5 (193 aa).

Its function is as follows. Repression of replication initiation (possible). In Dictyostelium discoideum (Social amoeba), this protein is Protein D5 (ddpE).